The chain runs to 434 residues: ATP-dependent RNA helicase sub2 (434 aa).

The short motif at 59 to 87 (TGFRDFLLKGELLRAITDCGFEHPSEVQQ) is the Q motif element. The region spanning 90–265 (IPTAILNVDV…KKFMRNPLEV (176 aa)) is the Helicase ATP-binding domain. 103 to 110 (AKSGLGKT) contacts ATP. Residues 212–215 (DECD) carry the DECD box motif. The Helicase C-terminal domain maps to 293-430 (KLNELLDSLE…EYPEEGVDSS (138 aa)).

Belongs to the DEAD box helicase family. DECD subfamily.

It is found in the nucleus. The enzyme catalyses ATP + H2O = ADP + phosphate + H(+). In terms of biological role, ATP-binding RNA helicase involved in transcription elongation and required for the export of mRNA out of the nucleus. SUB2 also plays a role in pre-mRNA splicing and spliceosome assembly. May be involved in rDNA and telomeric silencing, and maintenance of genome integrity. This chain is ATP-dependent RNA helicase sub2 (sub2), found in Emericella nidulans (strain FGSC A4 / ATCC 38163 / CBS 112.46 / NRRL 194 / M139) (Aspergillus nidulans).